The following is a 377-amino-acid chain: Queuine tRNA-ribosyltransferase (377 aa).

Aspartate 89 (proton acceptor) is an active-site residue. Substrate is bound by residues 89 to 93 (DSGGF), aspartate 143, glutamine 187, and glycine 214. Residues 245 to 251 (GVGKPED) are RNA binding. The active-site Nucleophile is the aspartate 264. The segment at 269-273 (TRNAR) is RNA binding; important for wobble base 34 recognition. Zn(2+) is bound by residues cysteine 302, cysteine 304, cysteine 307, and histidine 333.

This sequence belongs to the queuine tRNA-ribosyltransferase family. In terms of assembly, homodimer. Within each dimer, one monomer is responsible for RNA recognition and catalysis, while the other monomer binds to the replacement base PreQ1. Requires Zn(2+) as cofactor.

It catalyses the reaction 7-aminomethyl-7-carbaguanine + guanosine(34) in tRNA = 7-aminomethyl-7-carbaguanosine(34) in tRNA + guanine. The protein operates within tRNA modification; tRNA-queuosine biosynthesis. In terms of biological role, catalyzes the base-exchange of a guanine (G) residue with the queuine precursor 7-aminomethyl-7-deazaguanine (PreQ1) at position 34 (anticodon wobble position) in tRNAs with GU(N) anticodons (tRNA-Asp, -Asn, -His and -Tyr). Catalysis occurs through a double-displacement mechanism. The nucleophile active site attacks the C1' of nucleotide 34 to detach the guanine base from the RNA, forming a covalent enzyme-RNA intermediate. The proton acceptor active site deprotonates the incoming PreQ1, allowing a nucleophilic attack on the C1' of the ribose to form the product. After dissociation, two additional enzymatic reactions on the tRNA convert PreQ1 to queuine (Q), resulting in the hypermodified nucleoside queuosine (7-(((4,5-cis-dihydroxy-2-cyclopenten-1-yl)amino)methyl)-7-deazaguanosine). This chain is Queuine tRNA-ribosyltransferase, found in Shewanella piezotolerans (strain WP3 / JCM 13877).